The primary structure comprises 577 residues: Proline--tRNA ligase (577 aa).

This sequence belongs to the class-II aminoacyl-tRNA synthetase family. ProS type 1 subfamily. In terms of assembly, homodimer.

The protein resides in the cytoplasm. It catalyses the reaction tRNA(Pro) + L-proline + ATP = L-prolyl-tRNA(Pro) + AMP + diphosphate. Its function is as follows. Catalyzes the attachment of proline to tRNA(Pro) in a two-step reaction: proline is first activated by ATP to form Pro-AMP and then transferred to the acceptor end of tRNA(Pro). As ProRS can inadvertently accommodate and process non-cognate amino acids such as alanine and cysteine, to avoid such errors it has two additional distinct editing activities against alanine. One activity is designated as 'pretransfer' editing and involves the tRNA(Pro)-independent hydrolysis of activated Ala-AMP. The other activity is designated 'posttransfer' editing and involves deacylation of mischarged Ala-tRNA(Pro). The misacylated Cys-tRNA(Pro) is not edited by ProRS. This chain is Proline--tRNA ligase, found in Limosilactobacillus reuteri (strain DSM 20016) (Lactobacillus reuteri).